The chain runs to 241 residues: Biosynthetic peptidoglycan transglycosylase (241 aa).

The chain crosses the membrane as a helical span at residues 18–38 (GVIGIIALWMAGILIFAFLPV).

It belongs to the glycosyltransferase 51 family.

It is found in the cell inner membrane. It carries out the reaction [GlcNAc-(1-&gt;4)-Mur2Ac(oyl-L-Ala-gamma-D-Glu-L-Lys-D-Ala-D-Ala)](n)-di-trans,octa-cis-undecaprenyl diphosphate + beta-D-GlcNAc-(1-&gt;4)-Mur2Ac(oyl-L-Ala-gamma-D-Glu-L-Lys-D-Ala-D-Ala)-di-trans,octa-cis-undecaprenyl diphosphate = [GlcNAc-(1-&gt;4)-Mur2Ac(oyl-L-Ala-gamma-D-Glu-L-Lys-D-Ala-D-Ala)](n+1)-di-trans,octa-cis-undecaprenyl diphosphate + di-trans,octa-cis-undecaprenyl diphosphate + H(+). It functions in the pathway cell wall biogenesis; peptidoglycan biosynthesis. Its function is as follows. Peptidoglycan polymerase that catalyzes glycan chain elongation from lipid-linked precursors. The sequence is that of Biosynthetic peptidoglycan transglycosylase from Yersinia pseudotuberculosis serotype IB (strain PB1/+).